The following is an 890-amino-acid chain: Translation initiation factor IF-2 (890 aa).

Residues 110 to 216 (ISKPISKAPQ…KKPLIKTQDH (107 aa)) are disordered. A compositionally biased stretch (basic residues) spans 135–148 (VPKRKGLVIIKKKR). The segment covering 184–199 (KSYNEPKNKENDDIKK) has biased composition (basic and acidic residues). The segment covering 200 to 210 (QKVKKEKKKPL) has biased composition (basic residues). Residues 387–554 (TRPPVVTIMG…NILLQAEILE (168 aa)) form the tr-type G domain. Residues 396–403 (GHVDHGKT) form a G1 region. 396–403 (GHVDHGKT) serves as a coordination point for GTP. Residues 421–425 (GITQH) are G2. The tract at residues 442–445 (DTPG) is G3. Residues 442–446 (DTPGH) and 496–499 (NKMD) each bind GTP. The interval 496 to 499 (NKMD) is G4. The interval 532-534 (SAR) is G5.

The protein belongs to the TRAFAC class translation factor GTPase superfamily. Classic translation factor GTPase family. IF-2 subfamily.

The protein localises to the cytoplasm. Its function is as follows. One of the essential components for the initiation of protein synthesis. Protects formylmethionyl-tRNA from spontaneous hydrolysis and promotes its binding to the 30S ribosomal subunits. Also involved in the hydrolysis of GTP during the formation of the 70S ribosomal complex. This chain is Translation initiation factor IF-2, found in Aliarcobacter butzleri (strain RM4018) (Arcobacter butzleri).